We begin with the raw amino-acid sequence, 273 residues long: Beta-lactamase OXA-23 (273 aa).

A signal peptide spans 1–17; the sequence is MNKYFTCYVVASLFLSG. The active-site Acyl-ester intermediate is the Ser79. The a beta-lactam site is built by Ser79, Lys82, Ser126, Thr217, Trp219, and Arg259. Lys82 bears the N6-carboxylysine mark.

It belongs to the class-D beta-lactamase family. As to quaternary structure, monomer. In terms of processing, carboxylated on the epsilon-amino group of a lysine, with the resulting carbamate functional group serving as a general base. Probably N-carboxylated at Lys-82 at neutral pH in vivo and undergoes complete N-decarboxylation, at pH 4.1, in vitro.

Its subcellular location is the periplasm. The catalysed reaction is a beta-lactam + H2O = a substituted beta-amino acid. Inhibited by the desmethyl carbapenem, MA-1-206, via a covalent binding to Ser-79. In terms of biological role, class D beta-lactamase which confers resistance to the beta-lactam antibiotics, including ampicillin, and carbapenems such as imipenem and meropenem. Acts via hydrolysis of the beta-lactam ring. Has penicillin-, cephalosporin- and carbapenem-hydrolyzing activities, but lacks ceftazidime-hydrolyzing activity. The chain is Beta-lactamase OXA-23 from Acinetobacter baumannii.